Here is a 352-residue protein sequence, read N- to C-terminus: C-X-C chemokine receptor type 4 (352 aa).

Residues 1-21 are important for chemokine binding and signaling; sequence MEGISIYTSDNYTEEMGSGDY. At 1–38 the chain is on the extracellular side; that stretch reads MEGISIYTSDNYTEEMGSGDYDSIKEPCFREENAHFNR. Sulfotyrosine is present on tyrosine 7. N-linked (GlcNAc...) asparagine glycosylation is present at asparagine 11. Tyrosine 12 carries the sulfotyrosine modification. An O-linked (Xyl...) (chondroitin sulfate) serine glycan is attached at serine 18. Tyrosine 21 bears the Sulfotyrosine mark. 2 disulfide bridges follow: cysteine 28-cysteine 274 and cysteine 109-cysteine 186. Residues 39-63 form a helical membrane-spanning segment; it reads IFLPTIYSIIFLTGIVGNGLVILVM. The Cytoplasmic segment spans residues 64–77; sequence GYQKKLRSMTDKYR. A helical membrane pass occupies residues 78–99; it reads LHLSVADLLFVITLPFWAVDAV. A chemokine binding region spans residues 94–97; that stretch reads WAVD. The Extracellular segment spans residues 100–110; it reads ANWYFGKFLCK. Residues 111–130 traverse the membrane as a helical segment; that stretch reads AVHVIYTVNLYSSVLILAFI. The tract at residues 113 to 117 is chemokine binding; sequence HVIYT. Topologically, residues 131–154 are cytoplasmic; that stretch reads SLDRYLAIVHATNSQRPRKLLAEK. The Important for signaling signature appears at 133-135; that stretch reads DRY. An involved in dimerization; when bound to chemokine region spans residues 135–147; that stretch reads YLAIVHATNSQRP. Residues 155–174 traverse the membrane as a helical segment; the sequence is VVYVGVWIPALLLTIPDFIF. At 175 to 195 the chain is on the extracellular side; sequence ANVSEADDRYICDRFYPNDLW. Residues 186 to 190 are chemokine binding, important for signaling; sequence CDRFY. Positions 191–210 are involved in dimerization; that stretch reads PNDLWVVVFQFQHIMVGLIL. The helical transmembrane segment at 196–216 threads the bilayer; it reads VVVFQFQHIMVGLILPGIVIL. Topologically, residues 217–241 are cytoplasmic; sequence SCYCIIISKLSHSKGHQKRKALKTT. A helical membrane pass occupies residues 242-261; it reads VILILAFFACWLPYYIGISI. At 262-282 the chain is on the extracellular side; the sequence is DSFILLEIIRQGCEFENTVHK. The interval 266 to 268 is involved in dimerization; sequence LLE. Residues 283-302 form a helical membrane-spanning segment; sequence WISITEALAFFHCCLNPILY. At 303–352 the chain is on the cytoplasmic side; it reads AFLGAKFKTSAQHALTSVSRGSSLKILSKGKRGGHSSVSTESESSSFHSS. Residues serine 319 and serine 321 each carry the phosphoserine modification. Residues serine 324 and serine 325 each carry the phosphoserine; by PKC and GRK6 modification. The disordered stretch occupies residues 329 to 352; that stretch reads LSKGKRGGHSSVSTESESSSFHSS. At serine 330 the chain carries Phosphoserine; by GRK6. A Glycyl lysine isopeptide (Lys-Gly) (interchain with G-Cter in ubiquitin) cross-link involves residue lysine 331. The segment covering 337-352 has biased composition (low complexity); the sequence is HSSVSTESESSSFHSS. Serine 339 bears the Phosphoserine; by GRK6 mark. A phosphoserine mark is found at serine 348 and serine 351.

This sequence belongs to the G-protein coupled receptor 1 family. In terms of assembly, monomer. Can form homodimers. Interacts with CD164. Interacts with ARRB2; the interaction is dependent on the C-terminal phosphorylation of CXCR4 and allows activation of MAPK1 and MAPK3. Interacts with ARR3; the interaction is dependent on the C-terminal phosphorylation of CXCR4 and modulates calcium mobilization. Interacts with RNF113A; the interaction, enhanced by CXCL12, promotes CXCR4 ubiquitination and subsequent degradation. Interacts (via the cytoplasmic C-terminal) with ITCH (via the WW domains I and II); the interaction, enhanced by CXCL12, promotes CXCR4 ubiquitination and leads to its degradation. Interacts with extracellular ubiquitin. Interacts with DBN1; this interaction is enhanced by antigenic stimulation. Following LPS binding, may form a complex with GDF5, HSP90AA1 and HSPA8. In terms of processing, phosphorylated on agonist stimulation. Rapidly phosphorylated on serine and threonine residues in the C-terminal. Phosphorylation at Ser-324 and Ser-325 leads to recruitment of ITCH, ubiquitination and protein degradation. Ubiquitinated after ligand binding, leading to its degradation. Ubiquitinated by ITCH at the cell membrane on agonist stimulation. The ubiquitin-dependent mechanism, endosomal sorting complex required for transport (ESCRT), then targets CXCR4 for lysosomal degradation. This process is dependent also on prior Ser-/Thr-phosphorylation in the C-terminal of CXCR4. Also binding of ARRB1 to STAM negatively regulates CXCR4 sorting to lysosomes though modulating ubiquitination of SFR5S. Post-translationally, sulfation is required for efficient binding of CXCL12/SDF-1alpha and promotes its dimerization. In terms of processing, O- and N-glycosylated. N-glycosylation can mask coreceptor function. The O-glycosylation chondroitin sulfate attachment does not affect interaction with CXCL12/SDF-1alpha nor its coreceptor activity.

Its subcellular location is the cell membrane. It localises to the cell junction. The protein resides in the early endosome. It is found in the late endosome. The protein localises to the lysosome. Its function is as follows. Receptor for the C-X-C chemokine CXCL12/SDF-1 that transduces a signal by increasing intracellular calcium ion levels and enhancing MAPK1/MAPK3 activation. Involved in the AKT signaling cascade. Plays a role in regulation of cell migration, e.g. during wound healing. Acts as a receptor for extracellular ubiquitin; leading to enhanced intracellular calcium ions and reduced cellular cAMP levels. Binds bacterial lipopolysaccharide (LPS) et mediates LPS-induced inflammatory response, including TNF secretion by monocytes. Involved in hematopoiesis and in cardiac ventricular septum formation. Also plays an essential role in vascularization of the gastrointestinal tract, probably by regulating vascular branching and/or remodeling processes in endothelial cells. Involved in cerebellar development. In the CNS, could mediate hippocampal-neuron survival. This chain is C-X-C chemokine receptor type 4 (CXCR4), found in Saimiri sciureus (Common squirrel monkey).